Consider the following 159-residue polypeptide: Small heat shock protein hspM (159 aa).

The 159-residue stretch at 1–159 folds into the sHSP domain; that stretch reads MFVLNFELAG…LSNNIKIQIN (159 aa). The segment at 35-101 is disordered; it reads MNNNNKNNLQ…NNNNKSSKTN (67 aa). Low complexity-rich tracts occupy residues 36–46 and 61–95; these read NNNNKNNLQIN and SSSSNNNNNNNNNNNNNNNNNNNNNNNNNSNNNNN.

This sequence belongs to the small heat shock protein (HSP20) family.

The polypeptide is Small heat shock protein hspM (hspM) (Dictyostelium discoideum (Social amoeba)).